A 298-amino-acid chain; its full sequence is Transcription factor RHD6 (298 aa).

Disordered regions lie at residues 1 to 58 (MALV…SDHQ) and 157 to 213 (TGSR…AKNR). Low complexity predominate over residues 15–27 (SKQNSSSSEDLSS). Polar residues-rich tracts occupy residues 157–168 (TGSRNESLSPKS) and 177–190 (GEST…SSGV). Residues 191-205 (TGKTKPKPTTSPKDP) show a composition bias toward low complexity. The basic motif stretch occupies residues 201-214 (SPKDPQSLAAKNRR). The 50-residue stretch at 201–250 (SPKDPQSLAAKNRRERISERLKILQELVPNGTKVDLVTMLEKAISYVKFL) folds into the bHLH domain. The interval 215–250 (ERISERLKILQELVPNGTKVDLVTMLEKAISYVKFL) is helix-loop-helix motif.

In terms of assembly, homodimer. Forms heterodimers with RSL1. Interacts with TIFY10B/JAZ2, TIFY6A/JAZ4, TIFY5A/JAZ8, TIFY7/JAZ9 and TIFY9/JAZ10. In terms of tissue distribution, expressed constitutively in flowers. Expressed in root epidermal hair cells.

It localises to the nucleus. Functionally, transcription factor that is specifically required for the development of root hairs. Acts with RSL1 to positively regulate root hair development. Acts downstream of genes that regulate epidermal pattern formation, such as GL2. Targets directly RSL4, another transcription factor involved in the regulation of root hair elongation. Acts with RSL1 as transcription factor that integrates a jasmonate (JA) signaling pathway that stimulates root hair growth. In Arabidopsis thaliana (Mouse-ear cress), this protein is Transcription factor RHD6.